The chain runs to 336 residues: Protein-glutamate methylesterase/protein-glutamine glutaminase 1 (336 aa).

Residues 2–119 (KIAIVNDMPM…GNAQEAAAPL (118 aa)) enclose the Response regulatory domain. Residue aspartate 53 is modified to 4-aspartylphosphate. The region spanning 143–336 (PLRSGAPRQS…APRLLEIFAK (194 aa)) is the CheB-type methylesterase domain. Active-site residues include serine 159, histidine 186, and aspartate 279.

This sequence belongs to the CheB family. Phosphorylated by CheA. Phosphorylation of the N-terminal regulatory domain activates the methylesterase activity.

The protein localises to the cytoplasm. The enzyme catalyses [protein]-L-glutamate 5-O-methyl ester + H2O = L-glutamyl-[protein] + methanol + H(+). The catalysed reaction is L-glutaminyl-[protein] + H2O = L-glutamyl-[protein] + NH4(+). In terms of biological role, involved in chemotaxis. Part of a chemotaxis signal transduction system that modulates chemotaxis in response to various stimuli. Catalyzes the demethylation of specific methylglutamate residues introduced into the chemoreceptors (methyl-accepting chemotaxis proteins or MCP) by CheR. Also mediates the irreversible deamidation of specific glutamine residues to glutamic acid. The sequence is that of Protein-glutamate methylesterase/protein-glutamine glutaminase 1 from Pseudomonas fluorescens (strain ATCC BAA-477 / NRRL B-23932 / Pf-5).